The chain runs to 68 residues: Protein transport protein Sec61 subunit gamma (68 aa).

Over 1 to 32 the chain is Cytoplasmic; it reads MDQVMQFVEPSRQFVKDSIRLVKRCTKPDRKE. Residues 33–61 traverse the membrane as a helical segment; the sequence is FQKVAMATAIGFAIMGFIGFFVKLIHIPI. Over 62–68 the chain is Extracellular; sequence NNIIVGG.

This sequence belongs to the SecE/SEC61-gamma family. The SEC61 channel-forming translocon complex consists of channel-forming core components SEC61A1, SEC61B and SEC61G and different auxiliary components such as SEC62 and SEC63. The SEC61 channel associates with the multi-pass translocon (MPT) complex.

The protein resides in the endoplasmic reticulum membrane. Functionally, component of SEC61 channel-forming translocon complex that mediates transport of signal peptide-containing precursor polypeptides across the endoplasmic reticulum (ER). Forms a ribosome receptor and a gated pore in the ER membrane, both functions required for cotranslational translocation of nascent polypeptides. The SEC61 channel is also involved in ER membrane insertion of transmembrane proteins: it mediates membrane insertion of the first few transmembrane segments of proteins, while insertion of subsequent transmembrane regions of multi-pass membrane proteins is mediated by the multi-pass translocon (MPT) complex. The polypeptide is Protein transport protein Sec61 subunit gamma (sec61g) (Harpagifer antarcticus (Antarctic spiny plunderfish)).